A 449-amino-acid polypeptide reads, in one-letter code: MELETHLSKYFTLAFTHKSMSLEMREKLAINSPIMLKELLQTIKTHCPNIKECMVLSTCNRFEIYASLKHGANTHEQKSALLKILAQNKKMSVSDLEKCVLINTDESAVHHVFSVCSSLDSLVVGETQITGQMKNAYKFAFEEKFCSKDLTRLLHFAFKCAAKVRNLTGISKQGVSISSVAVKEALSIFEKERIKDKKALVIGLGEMAQLVIKHLLNKQFEVLILGRNAAKFEDFVKELEEPKKVGFQNVENLNAYINEYELLFCATSSPNFIVRNSMLKETIFRRFWFDLAVPRNIEKPTLNHIFLYSVDDLEPMVKENVGNRQESRTKAYEIVGLATMEFYQWIQSLEVEPLIKDLRELARISAQKELQKALKKRYVPKEYEGNIEKILHNAFNTFLHHPTIALKKNAQKEESDVLVGAIKNLFNLDKSNANHAQNLNLYKCEYYEE.

Substrate is bound by residues 58–61 (TCNR), Ser-121, 126–128 (ETQ), and Gln-132. The active-site Nucleophile is Cys-59. Position 203–208 (203–208 (GLGEMA)) interacts with NADP(+).

The protein belongs to the glutamyl-tRNA reductase family. In terms of assembly, homodimer.

It catalyses the reaction (S)-4-amino-5-oxopentanoate + tRNA(Glu) + NADP(+) = L-glutamyl-tRNA(Glu) + NADPH + H(+). It participates in porphyrin-containing compound metabolism; protoporphyrin-IX biosynthesis; 5-aminolevulinate from L-glutamyl-tRNA(Glu): step 1/2. In terms of biological role, catalyzes the NADPH-dependent reduction of glutamyl-tRNA(Glu) to glutamate 1-semialdehyde (GSA). This chain is Glutamyl-tRNA reductase, found in Helicobacter pylori (strain J99 / ATCC 700824) (Campylobacter pylori J99).